The following is a 522-amino-acid chain: Putative aldehyde dehydrogenase-like protein C21C3 (522 aa).

Glu239 acts as the Proton acceptor in catalysis. Cys273 functions as the Nucleophile in the catalytic mechanism.

Belongs to the aldehyde dehydrogenase family.

It is found in the cytoplasm. Its subcellular location is the nucleus. This chain is Putative aldehyde dehydrogenase-like protein C21C3, found in Schizosaccharomyces pombe (strain 972 / ATCC 24843) (Fission yeast).